Here is a 61-residue protein sequence, read N- to C-terminus: uncharacterized protein (61 aa).

This is an uncharacterized protein from Frog virus 3 (isolate Goorha) (FV-3).